The primary structure comprises 136 residues: Peptide methionine sulfoxide reductase MsrB (136 aa).

A MsrB domain is found at 9–136 (DAEWKALLAE…NSASLDFKPK (128 aa)). 4 residues coordinate Zn(2+): Cys53, Cys56, Cys102, and Cys105. The active-site Nucleophile is Cys125.

It belongs to the MsrB Met sulfoxide reductase family. Requires Zn(2+) as cofactor.

The catalysed reaction is L-methionyl-[protein] + [thioredoxin]-disulfide + H2O = L-methionyl-(R)-S-oxide-[protein] + [thioredoxin]-dithiol. In Polaromonas sp. (strain JS666 / ATCC BAA-500), this protein is Peptide methionine sulfoxide reductase MsrB.